Here is a 1063-residue protein sequence, read N- to C-terminus: Valine--tRNA ligase, mitochondrial (1063 aa).

A mitochondrion-targeting transit peptide spans methionine 1–histidine 26. Positions phenylalanine 25–glutamate 53 are disordered. Over residues arginine 42–glutamate 53 the composition is skewed to basic and acidic residues. The 'HIGH' region signature appears at proline 146 to histidine 156. A 'KMSKS' region motif is present at residues lysine 658 to serine 662. ATP is bound at residue lysine 661.

Belongs to the class-I aminoacyl-tRNA synthetase family.

It is found in the mitochondrion. The catalysed reaction is tRNA(Val) + L-valine + ATP = L-valyl-tRNA(Val) + AMP + diphosphate. Functionally, catalyzes the attachment of valine to tRNA(Val) in a two-step reaction: valine is first activated by ATP to form Val-AMP and then transferred to the acceptor end of tRNA(Val). This chain is Valine--tRNA ligase, mitochondrial (VARS2), found in Homo sapiens (Human).